A 30-amino-acid chain; its full sequence is Cliotide T20 (30 aa).

Residues 1-30 constitute a cross-link (cyclopeptide (Gly-Asn)); that stretch reads GSAIRCGESCLLGKCYTPGCTCDRPICKKN. 3 disulfides stabilise this stretch: C6–C20, C10–C22, and C15–C27.

Contains 3 disulfide bonds. Post-translationally, this is a cyclic peptide. As to expression, expressed in root nodules but not in seed.

Its function is as follows. Probably participates in a plant defense mechanism. Active against Gram-negative bacterium E.coli ATCC 700926 (MIC=0.5 uM) under low-salt conditions. Not active against Gram-positive bacterium S.aureus ATCC 12600 up to a concentration of 100 uM under low-salt conditions. Exhibits immunomodulatory activity but no cytotoxicity in vitro. The chain is Cliotide T20 from Clitoria ternatea (Butterfly pea).